The primary structure comprises 540 residues: L-aspartate oxidase (540 aa).

FAD-binding positions include 16 to 19, Lys-38, 45 to 52, and Asp-223; these read SGAA and STFYAQGG. Arg-290 serves as the catalytic Proton donor/acceptor. FAD is bound by residues Glu-375 and 391–392; that span reads SL.

Belongs to the FAD-dependent oxidoreductase 2 family. NadB subfamily. It depends on FAD as a cofactor.

The protein resides in the cytoplasm. It carries out the reaction L-aspartate + O2 = iminosuccinate + H2O2. The protein operates within cofactor biosynthesis; NAD(+) biosynthesis; iminoaspartate from L-aspartate (oxidase route): step 1/1. Its function is as follows. Catalyzes the oxidation of L-aspartate to iminoaspartate, the first step in the de novo biosynthesis of NAD(+). The chain is L-aspartate oxidase (nadB) from Salmonella typhimurium (strain LT2 / SGSC1412 / ATCC 700720).